The following is a 497-amino-acid chain: MEMILMVSLCLTTLITLFLLKQFLKRTANKVNLPPSPWRLPLIGNLHQLSLHPHRSLHSLSLRYGPLMLLHFGRVPILVVSSGEAAQEVLKTHDLKFANRPRSKAVHGLMNGGRDVVFGPYGEYWRQMKSVCILNLLTNKMVASFEKIREEELNEMIKKLEKASSSSSSENLSELFVTLPSDVTSRIALGRKHSEDETARDLKKRVRQIMELLGEFPIGDYVPALAWIDRINGFNARIKEVSQGFSDLMDKVVQEHLEAGNHKEDFVDILLSIESEKSIGFQAQRDDIKFMILDMFIGGTSTSSTLLEWIMTELIRNPNVMKKLQDEIRSTIRPHGSYIKEKDVENMKYLKAVIKEVFRVHPPLPLILPRLLSEDVKVKGYNIAAGTEVIINAWAIQRDPAIWGPDAEEFKPERHLDSTLDYHGKDLNFIPFGSGRRICPGINLALGLVEVTVANLVGRFDWRAEAGPNGDQPDLTEAFGLDVCRKFPLIAFPSSVI.

The helical transmembrane segment at 4-24 (ILMVSLCLTTLITLFLLKQFL) threads the bilayer. Cys-439 provides a ligand contact to heme.

It belongs to the cytochrome P450 family. Requires heme as cofactor.

The protein resides in the membrane. Converts indole-3-acetaldoxime to indole cyanohydrin. Involved in the biosynthetic pathway to 4-hydroxyindole-3-carbonyl nitrile (4-OH-ICN), a cyanogenic metabolite required for inducible pathogen defense. The polypeptide is Cytochrome P450 71A12 (CYP71A12) (Arabidopsis thaliana (Mouse-ear cress)).